Reading from the N-terminus, the 1653-residue chain is Alpha-2-macroglobulin (1653 aa).

The N-terminal stretch at 1–17 (MKKLRVAACMLMLALAG) is a signal peptide. A lipid anchor (N-palmitoyl cysteine) is attached at Cys-18. Cys-18 carries the S-diacylglycerol cysteine lipid modification. Positions 1187 to 1190 (CLEQ) form a cross-link, isoglutamyl cysteine thioester (Cys-Gln). The stretch at 1559 to 1589 (NQNLANGSASLEQSGGEVQNLLNQMQQASIK) forms a coiled coil.

The protein belongs to the protease inhibitor I39 (alpha-2-macroglobulin) family. Bacterial alpha-2-macroglobulin subfamily. May form homooligomers.

The protein resides in the cell inner membrane. In terms of biological role, protects the bacterial cell from host peptidases. Acts by a 'trapping' mechanism. Cleavage of the bait-region domain by host peptidases leads to a global conformational change, which results in entrapment of the host peptidase and activation of the thioester bond that covalently binds the attacking host peptidase. Trapped peptidases are still active except against very large substrates. May protect the entire periplam, including the lipoproteins anchored to the periplasmic side of the outer membrane, against intruding endopeptidases. The sequence is that of Alpha-2-macroglobulin (yfhM) from Escherichia coli (strain K12).